The following is a 360-amino-acid chain: Dihydroorotate dehydrogenase (quinone) (360 aa).

FMN contacts are provided by residues 67–71 (AGLDK) and Thr91. Lys71 contributes to the substrate binding site. 116-120 (NRMGF) is a substrate binding site. The FMN site is built by Asn145 and Asn176. A substrate-binding site is contributed by Asn176. Catalysis depends on Ser179, which acts as the Nucleophile. Position 181 (Asn181) interacts with substrate. 2 residues coordinate FMN: Lys222 and Ser250. A substrate-binding site is contributed by 251–252 (NT). FMN-binding positions include Gly272, Gly301, and 322–323 (YS).

The protein belongs to the dihydroorotate dehydrogenase family. Type 2 subfamily. In terms of assembly, monomer. The cofactor is FMN.

Its subcellular location is the cell membrane. It catalyses the reaction (S)-dihydroorotate + a quinone = orotate + a quinol. Its pathway is pyrimidine metabolism; UMP biosynthesis via de novo pathway; orotate from (S)-dihydroorotate (quinone route): step 1/1. Functionally, catalyzes the conversion of dihydroorotate to orotate with quinone as electron acceptor. This is Dihydroorotate dehydrogenase (quinone) from Deinococcus deserti (strain DSM 17065 / CIP 109153 / LMG 22923 / VCD115).